Consider the following 286-residue polypeptide: 33 kDa chaperonin (286 aa).

Cystine bridges form between cysteine 225-cysteine 227 and cysteine 258-cysteine 261.

The protein belongs to the HSP33 family. Post-translationally, under oxidizing conditions two disulfide bonds are formed involving the reactive cysteines. Under reducing conditions zinc is bound to the reactive cysteines and the protein is inactive.

The protein resides in the cytoplasm. Its function is as follows. Redox regulated molecular chaperone. Protects both thermally unfolding and oxidatively damaged proteins from irreversible aggregation. Plays an important role in the bacterial defense system toward oxidative stress. In Shewanella baltica (strain OS223), this protein is 33 kDa chaperonin.